The primary structure comprises 240 residues: Extracellular superoxide dismutase [Cu-Zn] (240 aa).

Positions 1 to 18 (MLALLCSCLLLAAGASDA) are cleaved as a signal peptide. 2 cysteine pairs are disulfide-bonded: Cys63–Cys208 and Cys125–Cys207. A glycan (N-linked (GlcNAc...) asparagine) is linked at Asn107. Positions 114, 116, and 131 each coordinate Cu cation. Zn(2+) contacts are provided by His131, His139, His142, and Asp145. His181 serves as a coordination point for Cu cation. Lys229 and Lys230 each carry an N-linked (Glc) (glycation) lysine; in vitro glycan.

This sequence belongs to the Cu-Zn superoxide dismutase family. In terms of assembly, homotetramer. Directly interacts with ATP7A; this interaction is copper-dependent and is required for SOD3 activity. Requires Cu cation as cofactor. Zn(2+) is required as a cofactor. Expressed in blood vessels, heart, lung, kidney and placenta. Major SOD isoenzyme in extracellular fluids such as plasma, lymph and synovial fluid.

Its subcellular location is the secreted. It localises to the extracellular space. The protein resides in the golgi apparatus. The protein localises to the trans-Golgi network. The enzyme catalyses 2 superoxide + 2 H(+) = H2O2 + O2. In terms of biological role, protect the extracellular space from toxic effect of reactive oxygen intermediates by converting superoxide radicals into hydrogen peroxide and oxygen. This chain is Extracellular superoxide dismutase [Cu-Zn] (SOD3), found in Homo sapiens (Human).